We begin with the raw amino-acid sequence, 245 residues long: MAVRASFENNNEIGCFAKLTNTYCLVAIGGSENFYSVFEGELSETIPVVHASIAGCRIIGRMCVGNRHGLMVPNNTTDQELQHMRNSLPDSVRIQRVEERLSALGNVIACNDYVALVHPDLDRETEEILADVLKVEVFRQTIAEQVLVGSYCAFSNQGGLLHPKTSIEDQDELSSLLQVPLVTGTVNRGSEVIAAGMVVNDWCAFCGLDTTSTELSVIESVFKLSDAHPSTIATSMRDSLIDSLT.

Belongs to the eIF-6 family. As to quaternary structure, monomer. Associates with the 60S ribosomal subunit.

Its subcellular location is the cytoplasm. It localises to the nucleus. The protein resides in the nucleolus. Its function is as follows. Binds to the 60S ribosomal subunit and prevents its association with the 40S ribosomal subunit to form the 80S initiation complex in the cytoplasm. May also be involved in ribosome biogenesis. The protein is Eukaryotic translation initiation factor 6 (eif6) of Xenopus laevis (African clawed frog).